We begin with the raw amino-acid sequence, 231 residues long: eRF1 methyltransferase catalytic subunit mtq2 (231 aa).

Residues 54-58 (GCGSG), Asp-80, and Asn-130 contribute to the S-adenosyl-L-methionine site. Residue 130–133 (NPPY) coordinates substrate.

Belongs to the eukaryotic/archaeal PrmC-related family. As to quaternary structure, heterodimer of mtq2-trm112. mtq2 is the catalytic subunit carrying the catalytic and the S-adenosyl L-methionine binding sites.

Its subcellular location is the cytoplasm. It localises to the nucleus. The enzyme catalyses L-glutaminyl-[peptide chain release factor] + S-adenosyl-L-methionine = N(5)-methyl-L-glutaminyl-[peptide chain release factor] + S-adenosyl-L-homocysteine + H(+). Its function is as follows. Methylates eRF1 on 'Gln-182' using S-adenosyl L-methionine as methyl donor. eRF1 needs to be complexed to eRF3 in its GTP-bound form to be efficiently methylated. The polypeptide is eRF1 methyltransferase catalytic subunit mtq2 (mtq2) (Schizosaccharomyces pombe (strain 972 / ATCC 24843) (Fission yeast)).